We begin with the raw amino-acid sequence, 414 residues long: Dual-specificity RNA methyltransferase RlmN (414 aa).

Residue Glu-127 is the Proton acceptor of the active site. The 248-residue stretch at Gly-133–Asp-380 folds into the Radical SAM core domain. Cysteines 140 and 385 form a disulfide. 3 residues coordinate [4Fe-4S] cluster: Cys-147, Cys-151, and Cys-154. Residues Gly-211 to Glu-212, Ser-243, Ser-265 to His-267, and Asn-342 each bind S-adenosyl-L-methionine. Cys-385 (S-methylcysteine intermediate) is an active-site residue.

This sequence belongs to the radical SAM superfamily. RlmN family. Requires [4Fe-4S] cluster as cofactor.

It is found in the cytoplasm. The catalysed reaction is adenosine(2503) in 23S rRNA + 2 reduced [2Fe-2S]-[ferredoxin] + 2 S-adenosyl-L-methionine = 2-methyladenosine(2503) in 23S rRNA + 5'-deoxyadenosine + L-methionine + 2 oxidized [2Fe-2S]-[ferredoxin] + S-adenosyl-L-homocysteine. It carries out the reaction adenosine(37) in tRNA + 2 reduced [2Fe-2S]-[ferredoxin] + 2 S-adenosyl-L-methionine = 2-methyladenosine(37) in tRNA + 5'-deoxyadenosine + L-methionine + 2 oxidized [2Fe-2S]-[ferredoxin] + S-adenosyl-L-homocysteine. Its function is as follows. Specifically methylates position 2 of adenine 2503 in 23S rRNA and position 2 of adenine 37 in tRNAs. m2A2503 modification seems to play a crucial role in the proofreading step occurring at the peptidyl transferase center and thus would serve to optimize ribosomal fidelity. The protein is Dual-specificity RNA methyltransferase RlmN of Bartonella bacilliformis (strain ATCC 35685 / KC583 / Herrer 020/F12,63).